The primary structure comprises 284 residues: MKNIGIAINPSKDYKNTILNMVKEKIENICNVTDIEVYNSFDIKNLNLSSLDLLIVLGGDGTLLGVARELEDDFKAPILGINIGNLGVLSSIEISDLELALKKLMTKDCKVHKRMMLNCEVDINESIKNIKALNEVAVARGTLSRMVKFKIFVDEKLYAIFKGDGLIVSTPTGSTAYSFSAGGPFICPDLEVISIVPICDHTKSMHPIVLKGDSTIKIIAENGGDQIYLTIDGQRAIEMKDNSVITVKKNPKSLKLLLFNDYDYFKVIRNKVLNNSKECDGEEI.

Asp-60 (proton acceptor) is an active-site residue. NAD(+)-binding positions include 60–61 (DG), 134–135 (NE), Arg-145, Lys-162, Asp-164, 175–180 (TAYSFS), and Gln-234.

It belongs to the NAD kinase family. The cofactor is a divalent metal cation.

Its subcellular location is the cytoplasm. It catalyses the reaction NAD(+) + ATP = ADP + NADP(+) + H(+). Its function is as follows. Involved in the regulation of the intracellular balance of NAD and NADP, and is a key enzyme in the biosynthesis of NADP. Catalyzes specifically the phosphorylation on 2'-hydroxyl of the adenosine moiety of NAD to yield NADP. The chain is NAD kinase from Clostridium botulinum (strain Alaska E43 / Type E3).